We begin with the raw amino-acid sequence, 129 residues long: M-zodatoxin-Lt8i (129 aa).

The N-terminal stretch at 1–20 is a signal peptide; the sequence is MKYFVVALALVAAFACIAES. A propeptide spanning residues 21–60 is cleaved from the precursor; the sequence is KPAESEHELAEVEEENELADLEDAVWLEHLADLSDLEEAR.

It belongs to the cationic peptide 06 (cytoinsectotoxin) family. As to expression, expressed by the venom gland.

The protein localises to the secreted. Its function is as follows. Insecticidal, cytolytic and antimicrobial peptide. Forms voltage-dependent, ion-permeable channels in membranes. At high concentration causes cell membrane lysis. The protein is M-zodatoxin-Lt8i (cit 1-6) of Lachesana tarabaevi (Spider).